Consider the following 157-residue polypeptide: uncharacterized protein (157 aa).

This is an uncharacterized protein from Pseudoalteromonas espejiana (Bacteriophage PM2).